A 254-amino-acid polypeptide reads, in one-letter code: Undecaprenyl-diphosphatase 3 (254 aa).

The next 8 helical transmembrane spans lie at 8–28 (TEFL…LIGF), 33–53 (AKVF…VIFW), 74–94 (LHII…HSAI), 97–117 (VLFG…LMIV), 133–153 (ITYK…WPGF), 174–194 (AEYT…LDLI), 207–227 (LFAT…VSFL), and 233–253 (VKLT…YFFI).

It belongs to the UppP family.

Its subcellular location is the cell membrane. The enzyme catalyses di-trans,octa-cis-undecaprenyl diphosphate + H2O = di-trans,octa-cis-undecaprenyl phosphate + phosphate + H(+). Catalyzes the dephosphorylation of undecaprenyl diphosphate (UPP). Confers resistance to bacitracin. The chain is Undecaprenyl-diphosphatase 3 from Bacillus thuringiensis (strain Al Hakam).